A 363-amino-acid polypeptide reads, in one-letter code: Autophagy-related protein 3 (363 aa).

2 stretches are compositionally biased toward basic and acidic residues: residues 84-106 (DFAG…RGDG) and 129-138 (ARVRDVRTVD). The flexible region stretch occupies residues 84–171 (DFAGDAGHDE…DDEAIIRDPK (88 aa)). The interval 84–174 (DFAGDAGHDE…AIIRDPKADN (91 aa)) is disordered. Residues 139–164 (ESGEMGEREDDEDDIPDMEDDDDDDE) are compositionally biased toward acidic residues. The active-site Glycyl thioester intermediate is Cys247. The interval 251–339 (SVMKTLLDRA…EEEVAIRVDQ (89 aa)) is handle region.

It belongs to the ATG3 family. In terms of assembly, monomer. Interacts with atg8 through an intermediate thioester bond through the C-terminal Gly of atg8. Interacts with the C-terminal region of the E1-like atg7 enzyme. Also interacts with the atg12-atg5 conjugate.

Its subcellular location is the cytoplasm. E2 conjugating enzyme required for the cytoplasm to vacuole transport (Cvt) and autophagy. Required for selective autophagic degradation of the nucleus (nucleophagy) as well as for mitophagy which contributes to regulate mitochondrial quantity and quality by eliminating the mitochondria to a basal level to fulfill cellular energy requirements and preventing excess ROS production. Responsible for the E2-like covalent binding of phosphatidylethanolamine to the C-terminal Gly of atg8. The atg12-atg5 conjugate plays a role of an E3 and promotes the transfer of atg8 from atg3 to phosphatidylethanolamine (PE). This step is required for the membrane association of atg8. The formation of the atg8-phosphatidylethanolamine conjugate is essential for autophagy and for the cytoplasm to vacuole transport (Cvt). The atg8-PE conjugate mediates tethering between adjacent membranes and stimulates membrane hemifusion, leading to expansion of the autophagosomal membrane during autophagy. Required for normal mycelial growth and conidiogenesis, and regulates sclerotial formation. Plays an essential role in pathogenesis. The polypeptide is Autophagy-related protein 3 (Botryotinia fuckeliana (strain BcDW1) (Noble rot fungus)).